A 179-amino-acid chain; its full sequence is Large ribosomal subunit protein uL5 (179 aa).

Belongs to the universal ribosomal protein uL5 family. In terms of assembly, part of the 50S ribosomal subunit; part of the 5S rRNA/L5/L18/L25 subcomplex. Contacts the 5S rRNA and the P site tRNA. Forms a bridge to the 30S subunit in the 70S ribosome.

This is one of the proteins that bind and probably mediate the attachment of the 5S RNA into the large ribosomal subunit, where it forms part of the central protuberance. In the 70S ribosome it contacts protein S13 of the 30S subunit (bridge B1b), connecting the 2 subunits; this bridge is implicated in subunit movement. Contacts the P site tRNA; the 5S rRNA and some of its associated proteins might help stabilize positioning of ribosome-bound tRNAs. The chain is Large ribosomal subunit protein uL5 from Erwinia tasmaniensis (strain DSM 17950 / CFBP 7177 / CIP 109463 / NCPPB 4357 / Et1/99).